Here is a 1316-residue protein sequence, read N- to C-terminus: DNA-directed RNA polymerase subunit beta' (1316 aa).

Zn(2+)-binding residues include Cys-60, Cys-62, Cys-75, and Cys-78. The tract at residues 183–209 (ELEEEGAKSDVRRKVRDGGEREMRQLR) is disordered. Asp-535, Asp-537, and Asp-539 together coordinate Mg(2+). Cys-890, Cys-966, Cys-973, and Cys-976 together coordinate Zn(2+).

It belongs to the RNA polymerase beta' chain family. In terms of assembly, the RNAP catalytic core consists of 2 alpha, 1 beta, 1 beta' and 1 omega subunit. When a sigma factor is associated with the core the holoenzyme is formed, which can initiate transcription. Requires Mg(2+) as cofactor. It depends on Zn(2+) as a cofactor.

The enzyme catalyses RNA(n) + a ribonucleoside 5'-triphosphate = RNA(n+1) + diphosphate. Functionally, DNA-dependent RNA polymerase catalyzes the transcription of DNA into RNA using the four ribonucleoside triphosphates as substrates. This Mycolicibacterium gilvum (strain PYR-GCK) (Mycobacterium gilvum (strain PYR-GCK)) protein is DNA-directed RNA polymerase subunit beta'.